The primary structure comprises 1021 residues: PDZ domain-containing protein 7 (1021 aa).

PDZ domains lie at 86 to 156 and 210 to 279; these read AVRV…LTSS and IVHL…EVLK. Low complexity predominate over residues 324 to 344; that stretch reads SSSSVSSYASSAPCSSGSLPS. Disordered stretches follow at residues 324–345, 431–495, and 724–814; these read SSSSVSSYASSAPCSSGSLPSD, ITRS…DSRS, and RRGA…HRPR. The span at 729–744 shows a compositional bias: pro residues; sequence APPPQPPPVAPRPPRP. The span at 758-767 shows a compositional bias: polar residues; the sequence is QQNQSQTPAQ. The span at 772 to 794 shows a compositional bias: basic residues; the sequence is SRSRSRSRSHSRGQGKSPGRRRS. The span at 799-808 shows a compositional bias: low complexity; the sequence is PIATAATANG. The 73-residue stretch at 858 to 930 folds into the PDZ 3 domain; the sequence is TITLSKMKQS…QRAVDTIRRA (73 aa). The tract at residues 992-1021 is disordered; it reads QLQQSLSSALKVPQSIPKLSPILKDPHDPS.

Homodimerizes (via PDZ2 domain). Component of USH2 complex, composed of ADGRV1, PDZD7, USH2A and WHRN. Interacts (via PDZ domains) with WHRN; the interaction is direct. Interacts with USH1G. Interacts with ADGRV1 (via the cytoplasmic region). Interacts with USH2A (via the cytoplasmic region). Interacts with MYO7A (via MyTH4-FERM domains). Isoform 1 is expressed in developing and adult cochlea but not retina. Isoform 2 is expressed in developing and adult cochlea and retina. Isoform 3 is expressed in adult cochlea and retina. Isoform 4 is expressed in retina and developing cochlea but not adult cochlea. Isoform 5 is expressed in adult cochlea but not in developing cochlea or retina.

The protein resides in the cell projection. The protein localises to the cilium. Its subcellular location is the nucleus. It is found in the stereocilium. Its function is as follows. In cochlear developing hair cells, essential in organizing the USH2 complex at stereocilia ankle links. Blocks inhibition of adenylate cyclase activity mediated by ADGRV1. The protein is PDZ domain-containing protein 7 of Mus musculus (Mouse).